The following is a 208-amino-acid chain: Virion protein US10 homolog (208 aa).

Residues 17-61 are disordered; the sequence is ARGAKLSPGQHPRPSHAVRGRTAPGTRSSRRRTCEDGTSGPRDPR. A zinc finger lies at 167–179; the sequence is CAFWCCLAHAATC.

It belongs to the herpesviridae US10 family. Post-translationally, phosphorylated.

It localises to the virion tegument. The protein localises to the host nucleus matrix. The sequence is that of Virion protein US10 homolog from Homo sapiens (Human).